The chain runs to 110 residues: B3 domain-containing protein LOC_Os02g10420 (110 aa).

A DNA-binding region (TF-B3) is located at residues 1 to 104 (MSAMLNENVP…VLSVTVHKAD (104 aa)).

It is found in the nucleus. The sequence is that of B3 domain-containing protein LOC_Os02g10420 from Oryza sativa subsp. japonica (Rice).